A 55-amino-acid chain; its full sequence is Seripauperin-7 (55 aa).

An N-terminal signal peptide occupies residues 1 to 20; that stretch reads MVKLTSIAAGVAAIAAGASA.

Belongs to the SRP1/TIP1 family. Seripauperin subfamily.

The sequence is that of Seripauperin-7 (PAU7) from Saccharomyces cerevisiae (strain ATCC 204508 / S288c) (Baker's yeast).